The primary structure comprises 1272 residues: MDLFDFFRDWDLEQQCHYEQDRSALKKREWERRNQEVQQEEDLFSSGFDLFGEPYKVAEYTNKGDALANRVQNTLGSYDEMKDLLSNHSSQNHLVGIPKNSAPQTPISKSEASFYPEQKNRMIPSHQETTHSSTPMPPPSVVILNSTLIHSNRKSKSEWPRDSHNTSPAQASQTSSQPNKMQTSTQDPPQTRLEDFFVYPAEQPQIGTVEKSNPSSKEENNPNSGGEDTFKEIFQSNSPEESEFTVQAPGSPLVASSLLAPSSGLSVPTFPPGLYCKTSMGQQKPTAYVRPMDGQDQATDISPTLKPSIEFENSFGNLSFGSLLDGKPSAVSSKTKLPKFTILQTSEVSLTSDPSCVEEILRESQHLTPGFTLQKWSDPSSRASTKMLEDDLKLSSDEDDLEPVKTLTTQCTANELYQAVEKAKPKNNPVNPLLATPQSTPATQTNVGSGSSSESESSSESDSDTESSTTDSESNEAPRVATPEPEPPSTNKWQLDKWLNKVTSQNKSFICGQNETPTETISLPPPIIQPVEVQVKVKPNPSQAVAVPKERPLLSLIREKARPRPTQKTPETKALKHKLSTSVDTVSQRTIGKKQPKKVEKNTSFEEFTWPKPNITNSTPKEKGSVELPDPPRSRNKATAHKPVPRKEPRPHVPLATEKKKYRGPGKIVPKSREFIETDSSTSDSNTDQEETLQIKVLPPCITSKSKETSNASLTLSTLTNGNSNNLSTSNEETAFSPPPAMQTELLSPLRDHENPKNLWVKIDLDLLSRVPGQNSVPVTPAKTDYKETASKPKRQTAATAVEKPAPKGKRKHKPAETAEKIPEKKQRLEDNTTICLLPPCISPAPPHKPPSTRENSSRRANRKKEEKLFPPALSPLAEDPPRRRNVSGNNGHFGQDKNISMAGQITSSKPKRSEGKFCATFKGISINEGDAPKKAASATVTVANMALATATATATVPAIVTATVTATATTTATATTTTTTTTISSITPTITSGLMDSSHLEMTSWAALPLLSSSSANVRRPKLTFDDSVHNADFYMQEAKKLKHKADALFEKFGKAVNYADAALSFTECGNAMERDPLEAKSPYTMYSETVELLRYAMRLKNFASPLASDGDKKLAVLCYRCLSLLYLRMFKLKKDHAMKYSRSLMEYFKQNASKVTQIPSPWVGNGKNTPSPVSLNNVSPINSVGNCNNGPVTIPQRIHHMAASHVNITSNVLRGYEHWDMADKLTRDNKEFFGDLDTLMGPLTQHSSMTNLVRYVRQGLCWLRIDAHLL.

Disordered regions lie at residues 151-190 (SNRK…DPPQ), 204-231 (PQIG…DTFK), 372-401 (TLQK…EDDL), 422-497 (KAKP…QLDK), 557-694 (IREK…ETLQ), 715-743 (TLST…PAMQ), and 772-899 (PGQN…QDKN). The span at 155-164 (SKSEWPRDSH) shows a compositional bias: basic and acidic residues. Residues 165–179 (NTSPAQASQTSSQPN) show a composition bias toward low complexity. Positions 180–189 (KMQTSTQDPP) are enriched in polar residues. The segment covering 210-227 (EKSNPSSKEENNPNSGGE) has biased composition (low complexity). The span at 374-384 (QKWSDPSSRAS) shows a compositional bias: polar residues. The segment covering 387-396 (MLEDDLKLSS) has biased composition (basic and acidic residues). At Ser-395 the chain carries Phosphoserine. The span at 436-450 (TPQSTPATQTNVGSG) shows a compositional bias: polar residues. A Phosphothreonine modification is found at Thr-482. The segment covering 580-590 (STSVDTVSQRT) has biased composition (polar residues). Residues 620–633 (PKEKGSVELPDPPR) show a composition bias toward basic and acidic residues. Basic residues predominate over residues 634-644 (SRNKATAHKPV). Over residues 715 to 734 (TLSTLTNGNSNNLSTSNEET) the composition is skewed to low complexity. A compositionally biased stretch (basic and acidic residues) spans 815–831 (PAETAEKIPEKKQRLED). Pro residues predominate over residues 841 to 850 (CISPAPPHKP). Polar residues predominate over residues 887-899 (VSGNNGHFGQDKN).

The protein belongs to the AF4 family. As to expression, highly expressed in the hippocampus, the piriform cortex, Purkinje cells and the cingulate gyrus.

The protein resides in the nucleus speckle. Its function is as follows. RNA-binding protein. Might be involved in alternative splicing regulation through an interaction with G-quartet RNA structure. This chain is AF4/FMR2 family member 2, found in Mus musculus (Mouse).